Here is a 159-residue protein sequence, read N- to C-terminus: Cyclic pyranopterin monophosphate synthase (159 aa).

Residues 76 to 78 (LCH) and 114 to 115 (ME) contribute to the substrate site. Residue Asp-129 is part of the active site.

The protein belongs to the MoaC family. As to quaternary structure, homohexamer; trimer of dimers.

The enzyme catalyses (8S)-3',8-cyclo-7,8-dihydroguanosine 5'-triphosphate = cyclic pyranopterin phosphate + diphosphate. The protein operates within cofactor biosynthesis; molybdopterin biosynthesis. Its function is as follows. Catalyzes the conversion of (8S)-3',8-cyclo-7,8-dihydroguanosine 5'-triphosphate to cyclic pyranopterin monophosphate (cPMP). In Clostridium botulinum (strain Alaska E43 / Type E3), this protein is Cyclic pyranopterin monophosphate synthase.